We begin with the raw amino-acid sequence, 378 residues long: Erythronate-4-phosphate dehydrogenase (378 aa).

Positions 45 and 66 each coordinate substrate. Aspartate 146 and threonine 175 together coordinate NAD(+). Residue arginine 208 is part of the active site. Aspartate 232 is an NAD(+) binding site. Glutamate 237 is a catalytic residue. The active-site Proton donor is histidine 254. Glycine 257 provides a ligand contact to NAD(+). Substrate is bound at residue tyrosine 258.

The protein belongs to the D-isomer specific 2-hydroxyacid dehydrogenase family. PdxB subfamily. In terms of assembly, homodimer.

Its subcellular location is the cytoplasm. It carries out the reaction 4-phospho-D-erythronate + NAD(+) = (R)-3-hydroxy-2-oxo-4-phosphooxybutanoate + NADH + H(+). It functions in the pathway cofactor biosynthesis; pyridoxine 5'-phosphate biosynthesis; pyridoxine 5'-phosphate from D-erythrose 4-phosphate: step 2/5. Catalyzes the oxidation of erythronate-4-phosphate to 3-hydroxy-2-oxo-4-phosphonooxybutanoate. The sequence is that of Erythronate-4-phosphate dehydrogenase from Klebsiella pneumoniae (strain 342).